Here is a 313-residue protein sequence, read N- to C-terminus: Ribonuclease HIII (313 aa).

Residues 62-88 (AERWTADAETPAPKKPASKKSIPSVYQ) form a disordered region. In terms of domain architecture, RNase H type-2 spans 96–312 (MSVIGSDEVG…TQKAKRIASK (217 aa)). A divalent metal cation contacts are provided by Asp-102, Glu-103, and Asp-207.

The protein belongs to the RNase HII family. RnhC subfamily. It depends on Mn(2+) as a cofactor. Mg(2+) is required as a cofactor.

It is found in the cytoplasm. The catalysed reaction is Endonucleolytic cleavage to 5'-phosphomonoester.. Endonuclease that specifically degrades the RNA of RNA-DNA hybrids. This Bacillus licheniformis (strain ATCC 14580 / DSM 13 / JCM 2505 / CCUG 7422 / NBRC 12200 / NCIMB 9375 / NCTC 10341 / NRRL NRS-1264 / Gibson 46) protein is Ribonuclease HIII.